A 316-amino-acid polypeptide reads, in one-letter code: Nucleoprotein (316 aa).

Residues Tyr43, Tyr46, Val76, Arg122, and Lys240 each coordinate RNA.

Belongs to the tenuiviruses nucleocapsid protein family.

The protein localises to the virion. It localises to the host cytoplasm. Encapsidates the genome, protecting it from nucleases. The encapsidated genomic RNA is termed the nucleocapsid (NC), and serves as template for viral transcription and replication. This chain is Nucleoprotein, found in Maize stripe virus (MStV).